The primary structure comprises 688 residues: MERPDLSTIPLTPGVYLYKDESGRIIYVGKARCLRRRVASYFRDVSALTPKTVAMLRHAVTIDTLSTTTEKEALLLEASLIKKHRPRYNIVLRDDKQYVLFRIGAKHPYPRLEIVRKARRDDGRYFGPFTSASAARETWKTIHRAFPLRRCSDRAFGNRVRACLYHHMGQCLGPCVNEVPSETYAALLEQVSLLLSGRSGELVDALRTEMEAASQGLDFERAAVLRDRIRALERTVERQAAVLPGGGDLDVVGVVEVENGLALGVLFVRQGVLLDGRSFFWPGLGFAEAPELLWSFLGQFYGPQATIPPRIVVPWLPDEDGETGDALDGSSDAVVPVAAATTIDASLADVRTGTEVTSLINASHAAPNVGESTQGDTLAGATGKGATHLMLETALAALRGGIVRIALPRNPAENRLVDMAMSNAREEARRKADTPLQDLLARALHLAGPPHRIEAVDVSHTGGRNTRVGMVVFEDGKPFPEAYRTYAFEDGDGDDYGTLAAWAGRRVESGPPWPDLLLVDGGRGQLAAVVRAFEECGMGAAFAVASIAKARTEEGRADRRAGNVSDRIFLPGRANPLPLRAGAPELLFLQHVRDTVHDYSIGKHRRARAGAALTGELQRVEGIGPATARALWERFDSLQAMADAGVEGLAAVPGVGRARAAALHAHLVTFFGSSKQGGHARTALQRKG.

One can recognise a GIY-YIG domain in the interval 11–90; that stretch reads LTPGVYLYKD…IKKHRPRYNI (80 aa). Positions 200–235 constitute a UVR domain; that stretch reads GELVDALRTEMEAASQGLDFERAAVLRDRIRALERT.

This sequence belongs to the UvrC family. As to quaternary structure, interacts with UvrB in an incision complex.

It localises to the cytoplasm. Functionally, the UvrABC repair system catalyzes the recognition and processing of DNA lesions. UvrC both incises the 5' and 3' sides of the lesion. The N-terminal half is responsible for the 3' incision and the C-terminal half is responsible for the 5' incision. The polypeptide is UvrABC system protein C (Nitratidesulfovibrio vulgaris (strain ATCC 29579 / DSM 644 / CCUG 34227 / NCIMB 8303 / VKM B-1760 / Hildenborough) (Desulfovibrio vulgaris)).